A 145-amino-acid polypeptide reads, in one-letter code: Transcriptional regulator MraZ (145 aa).

SpoVT-AbrB domains are found at residues 5–49 (TYNH…LESE) and 78–121 (TYKV…AKEV).

It belongs to the MraZ family. As to quaternary structure, forms oligomers.

The protein localises to the cytoplasm. It is found in the nucleoid. The chain is Transcriptional regulator MraZ from Ureaplasma urealyticum serovar 10 (strain ATCC 33699 / Western).